Reading from the N-terminus, the 224-residue chain is Orotidine 5'-phosphate decarboxylase (224 aa).

Residues aspartate 10, lysine 32, 59–68 (DLKLHDIPNT), threonine 115, arginine 175, glutamine 184, glycine 204, and arginine 205 contribute to the substrate site. The Proton donor role is filled by lysine 61.

The protein belongs to the OMP decarboxylase family. Type 1 subfamily. As to quaternary structure, homodimer.

It catalyses the reaction orotidine 5'-phosphate + H(+) = UMP + CO2. Its pathway is pyrimidine metabolism; UMP biosynthesis via de novo pathway; UMP from orotate: step 2/2. Catalyzes the decarboxylation of orotidine 5'-monophosphate (OMP) to uridine 5'-monophosphate (UMP). The protein is Orotidine 5'-phosphate decarboxylase of Novosphingobium aromaticivorans (strain ATCC 700278 / DSM 12444 / CCUG 56034 / CIP 105152 / NBRC 16084 / F199).